Here is a 325-residue protein sequence, read N- to C-terminus: Reticulocalbin-1 (325 aa).

The first 23 residues, 1–23 (MARGGRLGLALGLLLALVLALRA), serve as a signal peptide directing secretion. N-linked (GlcNAc...) asparagine; partial glycosylation is present at Asn47. Phosphoserine is present on residues Ser49 and Ser74. EF-hand domains follow at residues 73-108 (ESKE…VQKR), 109-144 (YIYD…YYLG), 160-195 (KMLP…EEFE), 197-232 (MKEI…HEDN), 238-273 (WVLS…QDYD), and 274-309 (HAQA…FVGS). Positions 86, 88, 90, 97, 122, 124, 126, 128, 133, 173, 175, 177, 179, 184, 210, 212, 214, 221, 251, 253, 255, 257, 262, 287, 289, 291, 293, and 298 each coordinate Ca(2+). A Prevents secretion from ER motif is present at residues 322-325 (HDEL).

The protein belongs to the CREC family. In terms of processing, O-glycosylated. O-mannosylated by POMT1 and POMT2 and elongated by POMGNT1.

It is found in the endoplasmic reticulum lumen. May regulate calcium-dependent activities in the endoplasmic reticulum lumen or post-ER compartment. The polypeptide is Reticulocalbin-1 (Rcn1) (Mus musculus (Mouse)).